Reading from the N-terminus, the 511-residue chain is Exodeoxyribonuclease 7 large subunit (511 aa).

It belongs to the XseA family. As to quaternary structure, heterooligomer composed of large and small subunits.

It localises to the cytoplasm. It carries out the reaction Exonucleolytic cleavage in either 5'- to 3'- or 3'- to 5'-direction to yield nucleoside 5'-phosphates.. In terms of biological role, bidirectionally degrades single-stranded DNA into large acid-insoluble oligonucleotides, which are then degraded further into small acid-soluble oligonucleotides. In Brucella ovis (strain ATCC 25840 / 63/290 / NCTC 10512), this protein is Exodeoxyribonuclease 7 large subunit.